Reading from the N-terminus, the 295-residue chain is Cyclic dipyrimidine nucleotide synthase CdnE (295 aa).

Residues 1 to 28 are disordered; that stretch reads MAKYTEDQLTSWTKPPSDSEQTKLENSE. A compositionally biased stretch (polar residues) spans 7–19; it reads DQLTSWTKPPSDS. 2 residues coordinate UTP: Gln-51 and Ser-53. Asp-67 lines the Mg(2+) pocket. Residues Lys-123, Asn-169, Arg-197, Phe-217, and Lys-276 each contribute to the UTP site. The Pyrimidine specificity motif (R/Q)xW in donor pocket motif lies at 275 to 277; the sequence is RKW.

It belongs to the CD-NTase family. E02 subfamily. In terms of assembly, monomer. It depends on Mg(2+) as a cofactor.

It catalyses the reaction 2 UTP = c-di-UMP + 2 diphosphate. The catalysed reaction is UTP + CTP = cyclic CMP-UMP + 2 diphosphate. In terms of biological role, cyclic nucleotide synthase (second messenger synthase) of a CBASS antivirus system. CBASS (cyclic oligonucleotide-based antiphage signaling system) provides immunity against bacteriophage. The CD-NTase protein synthesizes cyclic nucleotides in response to infection; these serve as specific second messenger signals. The signals activate a diverse range of effectors, leading to bacterial cell death and thus abortive phage infection. A type I-B(UU) CBASS system. The protein is Cyclic dipyrimidine nucleotide synthase CdnE of Cecembia lonarensis (strain CCUG 58316 / KCTC 22772 / LW9).